The chain runs to 478 residues: GTPase Obg (478 aa).

The Obg domain occupies 2–159; it reads TTFVDRVELH…QDIHLELKTV (158 aa). Residues 60–88 form a disordered region; that stretch reads YHHSPHRKATNGKPGEGGNRSGKDGQDLV. Residues 160 to 330 enclose the OBG-type G domain; it reads ADVALVGYPS…LSFALAELVA (171 aa). GTP contacts are provided by residues 166–173, 191–195, 212–215, 282–285, and 311–313; these read GYPSAGKS, FTTLV, DVPG, NKID, and SAV. Residues Ser-173 and Thr-193 each contribute to the Mg(2+) site. The 83-residue stretch at 348-430 folds into the OCT domain; the sequence is PKAVDDAGFT…DNAVVFDWEP (83 aa). The disordered stretch occupies residues 438 to 478; it reads MLGRRGEDHRFEAPRPAAQRRRDRDAERDEAQQEFDGFEPF. 2 stretches are compositionally biased toward basic and acidic residues: residues 439–450 and 457–468; these read LGRRGEDHRFEA and RRRDRDAERDEA. Residues 469-478 are compositionally biased toward acidic residues; the sequence is QQEFDGFEPF.

This sequence belongs to the TRAFAC class OBG-HflX-like GTPase superfamily. OBG GTPase family. In terms of assembly, monomer. The cofactor is Mg(2+).

Its subcellular location is the cytoplasm. The protein localises to the cell membrane. In terms of biological role, plays an unknown essential role and a regulatory role in sporulation. Overexpression suppresses sporulation although cell growth rate was not reduced. Impaired differentiation was eliminated by addition of decoyinine, an inhibitor of GMP synthesis. Overexpression has no effect on undecylprodigiosin production, but decreases actinorhodin production. Its function is as follows. An essential GTPase which binds GTP, GDP and possibly (p)ppGpp with moderate affinity, with high nucleotide exchange rates and a fairly low GTP hydrolysis rate. Plays a role in control of the cell cycle, stress response, ribosome biogenesis and in those bacteria that undergo differentiation, in morphogenesis control. This is GTPase Obg from Streptomyces coelicolor (strain ATCC BAA-471 / A3(2) / M145).